A 490-amino-acid polypeptide reads, in one-letter code: Betaine aldehyde dehydrogenase (490 aa).

Aspartate 93 lines the K(+) pocket. Position 150-152 (glycine 150–tryptophan 152) interacts with NAD(+). Residue lysine 162 is the Charge relay system of the active site. Lysine 176–glutamate 179 serves as a coordination point for NAD(+). Residue valine 180 coordinates K(+). Glycine 230 to serine 233 provides a ligand contact to NAD(+). Position 246 (leucine 246) interacts with K(+). Glutamate 252 acts as the Proton acceptor in catalysis. NAD(+) contacts are provided by glycine 254, cysteine 286, and glutamate 387. The Nucleophile role is filled by cysteine 286. Residue cysteine 286 is modified to Cysteine sulfenic acid (-SOH). 2 residues coordinate K(+): lysine 457 and glycine 460. The active-site Charge relay system is the glutamate 464.

Belongs to the aldehyde dehydrogenase family. As to quaternary structure, dimer of dimers. K(+) serves as cofactor.

The enzyme catalyses betaine aldehyde + NAD(+) + H2O = glycine betaine + NADH + 2 H(+). It participates in amine and polyamine biosynthesis; betaine biosynthesis via choline pathway; betaine from betaine aldehyde: step 1/1. Functionally, involved in the biosynthesis of the osmoprotectant glycine betaine. Catalyzes the irreversible oxidation of betaine aldehyde to the corresponding acid. In Yersinia pseudotuberculosis serotype I (strain IP32953), this protein is Betaine aldehyde dehydrogenase.